Reading from the N-terminus, the 258-residue chain is Gamma carbonic anhydrase 3, mitochondrial (258 aa).

The N-terminal 43 residues, 1-43 (MGTMGKAFYSVGFWIRETGQALDRLGCRLQGKNHFREQLSRHR), are a transit peptide targeting the mitochondrion. Residues 86 to 88 (RGD) and 101 to 102 (QD) contribute to the substrate site. Residues His107, His130, and His135 each contribute to the Zn(2+) site. Asn209 provides a ligand contact to substrate.

Belongs to the gamma-class carbonic anhydrase family. As to quaternary structure, homotrimer. Component of the oxidoreductase respiratory chain complex I; element of the extra matrix-exposed domain, which is attached to the membrane arm of this complex. Zn(2+) is required as a cofactor.

The protein localises to the mitochondrion membrane. In terms of biological role, enzyme involved in the catabolism of H(2)CO(3) but that does not mediates the reversible hydration of carbon dioxide. Mediates complex I assembly in mitochondria and respiration. In Arabidopsis thaliana (Mouse-ear cress), this protein is Gamma carbonic anhydrase 3, mitochondrial (GAMMACA3).